The primary structure comprises 409 residues: MARSRCVHRVVHQAACIGVIGLSTSALTTCDFTGIFVAIQSEVPIKTPSIPGAIYGLVKAGSKLYATNGQLWKKNVAEEGKDWERESCFDSVIGDSRITSLAADNGENGVLVACILGKGAYKWSQGSADQTSGNPSALSGTEKALSVVGTGTSCVYLNHTDDKVGETSSSESGGMTASGETNEFCLHAGNGFLVTTKKVCVGSDGSPVAKSDGEEPVPPILAATDDGSGHVYILTKDKVYCKKVNQSEGKIQDCPQSAAAAPEPTGAHSVAHKVADAHSIAFFKNGSDEFLLIGGRQGYGEIKLERGSGSNGNGAQCVHLKEENVHDQTGWHEKGSTPKGSAEQYRSTIGRWAVSGIYVIKKSTSGGRGKRSTSTDCERPDLYVAVGDTNDTYTGLWRFDSAAQKWNRE.

A signal peptide spans 1-29; that stretch reads MARSRCVHRVVHQAACIGVIGLSTSALTT. Cysteine 30 carries the N-palmitoyl cysteine lipid modification. Cysteine 30 carries the S-diacylglycerol cysteine lipid modification.

This sequence belongs to the TP013X lipoprotein family.

Its subcellular location is the cell membrane. This is an uncharacterized protein from Treponema pallidum (strain Nichols).